Consider the following 442-residue polypeptide: Limonoid 1-O-acetyltransferse (442 aa).

Active-site proton acceptor residues include H155 and D381.

The protein belongs to the plant acyltransferase family. In terms of assembly, monomer.

It carries out the reaction (1S)-1-hydroxy-luvungin A + acetyl-CoA = (1S)-1-acetoxy-luvungin A + CoA. It functions in the pathway secondary metabolite biosynthesis; terpenoid biosynthesis. Functionally, acetyltransferase involved in the biosynthesis of limonoids triterpene natural products such as limonin, a compound with insecticidal activity responsible for the bitter taste in citrus. Catalyzes the formation of (1S)-1-acetoxy-luvungin A from (1S)-1-hydroxy-luvungin A. This chain is Limonoid 1-O-acetyltransferse, found in Citrus sinensis (Sweet orange).